We begin with the raw amino-acid sequence, 226 residues long: Lysosomal-associated transmembrane protein 4B (226 aa).

The next 4 membrane-spanning stretches (helical) occupy residues 26-46 (ILLGVWYLILNAVVLLILLSA), 72-92 (MCIAIAISVLMILICAMATYG), 100-120 (WIIPFFCYQIFDFALNTLVAV), and 153-173 (CLVLIILLFISIILAFKGYLI). A required for NEDD4 interaction region spans residues 205-221 (PPYDDATVNSATKEPPP).

It belongs to the LAPTM4/LAPTM5 transporter family. Homooligomer; upon reaching the lysosomes. Interacts with MCOLN1. Interacts with NEDD4; may play a role in the lysosomal sorting of LAPTM4B; enhances HGS association with NEDD4; mediates inhibition of EGFR degradation. Interacts with PIP5K1C; promotes SNX5 association with LAPTM4B; kinase activity of PIP5K1C is required; interaction is regulated by phosphatidylinositol 4,5-bisphosphate generated by PIP5K1C. Interacts with HGS; promotes HGS ubiquitination. Interacts with SNX5. Interacts with SLC3A2 and SLC7A5; recruits SLC3A2 and SLC7A5 to lysosomes to promote leucine uptake into these organelles and is required for mTORC1 activation. Interacts with LRRC32; decreases TGFB1 production in regulatory T cells. Interacts with BECN1; competes with EGFR for LAPTM4B binding; regulates EGFR activity. Interacts with EGFR; positively correlates with EGFR activation. Post-translationally, undergoes proteolytic cleavage following delivery to the lysosomes. In terms of processing, ubiquitinated by NEDD4. In terms of tissue distribution, strongly expressed in fetal ovary, testis, adrenal gland, liver and uterus, and weakly expressed in the spleen.

It is found in the endomembrane system. Its subcellular location is the late endosome membrane. The protein localises to the cell membrane. The protein resides in the cell projection. It localises to the lysosome membrane. It is found in the endosome membrane. Its subcellular location is the endosome. The protein localises to the multivesicular body membrane. The protein resides in the multivesicular body lumen. Its function is as follows. Required for optimal lysosomal function. Blocks EGF-stimulated EGFR intraluminal sorting and degradation. Conversely by binding with the phosphatidylinositol 4,5-bisphosphate, regulates its PIP5K1C interaction, inhibits HGS ubiquitination and relieves LAPTM4B inhibition of EGFR degradation. Recruits SLC3A2 and SLC7A5 (the Leu transporter) to the lysosome, promoting entry of leucine and other essential amino acid (EAA) into the lysosome, stimulating activation of proton-transporting vacuolar (V)-ATPase protein pump (V-ATPase) and hence mTORC1 activation. Plays a role as negative regulator of TGFB1 production in regulatory T cells. Binds ceramide and facilitates its exit from late endosome in order to control cell death pathways. This is Lysosomal-associated transmembrane protein 4B from Bos taurus (Bovine).